A 447-amino-acid polypeptide reads, in one-letter code: Probable tRNA methyltransferase 9B (447 aa).

Serine 212 is subject to Phosphoserine. Disordered stretches follow at residues 274-306 and 320-348; these read AWAN…PNLD and WLRT…NFLD. Residues 276 to 286 show a composition bias toward polar residues; the sequence is ANSTVSQQPSR.

The protein belongs to the methyltransferase superfamily.

Functionally, may modify wobble uridines in specific arginine and glutamic acid tRNAs. Acts as a tumor suppressor by promoting the expression of LIN9. The chain is Probable tRNA methyltransferase 9B (Trmt9b) from Mus musculus (Mouse).